The primary structure comprises 114 residues: Transmembrane protein 14C (114 aa).

4 consecutive transmembrane segments (helical) span residues 8-28, 33-53, 62-82, and 87-107; these read LVPLHWLGFGYAALVASGGII, AGSVPSLAAGLLFGGLAGLGS, NIWLFLVTSGTLAGIMGMRFY, and FMPAGLIAGASLLMVVKLGIS.

The protein resides in the mitochondrion membrane. Functionally, required for normal heme biosynthesis. This chain is Transmembrane protein 14C (TMEM14C), found in Bos taurus (Bovine).